An 82-amino-acid polypeptide reads, in one-letter code: QEGNVCHRPCFRCHVCGETIAACAACSICIGCEEVVEDACAGNPCYWCDNCGVNDGSHRTTRDTADKTHGGSQRDRFFQSIA.

Residues His-58–Ala-82 are disordered.

Contains 6 disulfide bonds. In terms of tissue distribution, expressed by the venom duct.

It localises to the secreted. Acts as a neurotoxin by inhibiting an ion channel. This Iotyrris olangoensis (Sea snail) protein is Turripeptide OL139.